The sequence spans 236 residues: 2-C-methyl-D-erythritol 4-phosphate cytidylyltransferase (236 aa).

Belongs to the IspD/TarI cytidylyltransferase family. IspD subfamily. Homodimer.

It catalyses the reaction 2-C-methyl-D-erythritol 4-phosphate + CTP + H(+) = 4-CDP-2-C-methyl-D-erythritol + diphosphate. Its pathway is isoprenoid biosynthesis; isopentenyl diphosphate biosynthesis via DXP pathway; isopentenyl diphosphate from 1-deoxy-D-xylulose 5-phosphate: step 2/6. Catalyzes the formation of 4-diphosphocytidyl-2-C-methyl-D-erythritol from CTP and 2-C-methyl-D-erythritol 4-phosphate (MEP). The chain is 2-C-methyl-D-erythritol 4-phosphate cytidylyltransferase from Salmonella agona (strain SL483).